The following is a 1592-amino-acid chain: Laminin subunit gamma-1 (1592 aa).

Residues 1-19 (MRAPVLAVLAVLLLGTVRA) form the signal peptide. Residues 29–268 (SPQRCMPEFV…AISDFAVGGR (240 aa)) form the Laminin N-terminal domain. N-linked (GlcNAc...) asparagine glycosylation is found at Asn43 and Asn117. 16 cysteine pairs are disulfide-bonded: Cys269–Cys278, Cys271–Cys288, Cys290–Cys299, Cys302–Cys322, Cys325–Cys334, Cys327–Cys350, Cys353–Cys362, Cys365–Cys378, Cys381–Cys393, Cys383–Cys399, Cys401–Cys410, Cys413–Cys425, Cys428–Cys439, Cys430–Cys446, Cys448–Cys457, and Cys460–Cys475. 4 Laminin EGF-like domains span residues 269 to 324 (CKCN…ECLP), 325 to 380 (CNCN…PCHA), 381 to 427 (CQCN…GCRP), and 428 to 477 (CACN…GCTP). A Laminin IV type A domain is found at 504 to 672 (SGVEGWTAQQ…AGPSAPWVEI (169 aa)). N-linked (GlcNAc...) asparagine glycans are attached at residues Asn559 and Asn633. 24 cysteine pairs are disulfide-bonded: Cys707-Cys716, Cys709-Cys723, Cys725-Cys734, Cys737-Cys753, Cys756-Cys764, Cys758-Cys775, Cys778-Cys787, Cys790-Cys808, Cys811-Cys825, Cys813-Cys832, Cys835-Cys844, Cys847-Cys864, Cys867-Cys881, Cys869-Cys888, Cys890-Cys899, Cys902-Cys915, Cys918-Cys930, Cys920-Cys937, Cys939-Cys948, Cys951-Cys963, Cys966-Cys978, Cys968-Cys984, Cys986-Cys995, and Cys998-Cys1011. Laminin EGF-like domains are found at residues 707 to 755 (CTCN…DCQP), 756 to 810 (CPCP…PCRI), 811 to 866 (CECS…KCRA), 867 to 917 (CSCN…GCER), 918 to 965 (CDCH…GCKP), and 966 to 1013 (CDCD…GCQE). 11 N-linked (GlcNAc...) asparagine glycosylation sites follow: Asn1005, Asn1041, Asn1048, Asn1090, Asn1144, Asn1158, Asn1188, Asn1206, Asn1253, Asn1363, and Asn1386. The interval 1013 to 1592 (ECPACYRLVK…CYNTPIIEKP (580 aa)) is domain II and I. A coiled-coil region spans residues 1018–1477 (YRLVKDKVNE…DEKMAEMASN (460 aa)). Residues 1456–1472 (NQLKKKQAEAESDEKMA) are compositionally biased toward basic and acidic residues. The segment at 1456-1489 (NQLKKKQAEAESDEKMAEMASNATKDAESNANNS) is disordered. The span at 1476–1489 (SNATKDAESNANNS) shows a compositional bias: polar residues. Asn1477 and Asn1487 each carry an N-linked (GlcNAc...) asparagine glycan. Residues 1515–1579 (VGQLTVLEKT…ANLEDIKNTL (65 aa)) are a coiled coil.

In terms of assembly, laminin is a complex glycoprotein, consisting of three different polypeptide chains (alpha, beta, gamma), which are bound to each other by disulfide bonds into a cross-shaped molecule comprising one long and three short arms with globules at each end.

Its subcellular location is the secreted. It localises to the extracellular space. The protein resides in the extracellular matrix. It is found in the basement membrane. Functionally, binding to cells via a high affinity receptor, laminin is thought to mediate the attachment, migration and organization of cells into tissues during embryonic development by interacting with other extracellular matrix components. This is Laminin subunit gamma-1 (lamc1) from Xenopus tropicalis (Western clawed frog).